Reading from the N-terminus, the 635-residue chain is Threonine--tRNA ligase (635 aa).

The region spanning 1–61 (MIAITLPDGS…DRDAELAIVT (61 aa)) is the TGS domain. Positions 242-533 (DHRKLGKTLD…LLENHAGALP (292 aa)) are catalytic. Zn(2+) is bound by residues Cys333, His384, and His510.

This sequence belongs to the class-II aminoacyl-tRNA synthetase family. Homodimer. Zn(2+) is required as a cofactor.

The protein resides in the cytoplasm. It carries out the reaction tRNA(Thr) + L-threonine + ATP = L-threonyl-tRNA(Thr) + AMP + diphosphate + H(+). In terms of biological role, catalyzes the attachment of threonine to tRNA(Thr) in a two-step reaction: L-threonine is first activated by ATP to form Thr-AMP and then transferred to the acceptor end of tRNA(Thr). Also edits incorrectly charged L-seryl-tRNA(Thr). The protein is Threonine--tRNA ligase of Cupriavidus necator (strain ATCC 17699 / DSM 428 / KCTC 22496 / NCIMB 10442 / H16 / Stanier 337) (Ralstonia eutropha).